The chain runs to 599 residues: Elongation factor 4 (599 aa).

One can recognise a tr-type G domain in the interval 2 to 184 (NHIRNFSIIA…RLVRDIPAPE (183 aa)). Residues 14–19 (DHGKST) and 131–134 (NKID) contribute to the GTP site.

This sequence belongs to the TRAFAC class translation factor GTPase superfamily. Classic translation factor GTPase family. LepA subfamily.

The protein localises to the cell inner membrane. It catalyses the reaction GTP + H2O = GDP + phosphate + H(+). Functionally, required for accurate and efficient protein synthesis under certain stress conditions. May act as a fidelity factor of the translation reaction, by catalyzing a one-codon backward translocation of tRNAs on improperly translocated ribosomes. Back-translocation proceeds from a post-translocation (POST) complex to a pre-translocation (PRE) complex, thus giving elongation factor G a second chance to translocate the tRNAs correctly. Binds to ribosomes in a GTP-dependent manner. This is Elongation factor 4 from Yersinia pestis (strain Pestoides F).